A 440-amino-acid chain; its full sequence is Sialyltransferase-like protein 2 (440 aa).

Residues 1–5 (MKLLH) are Cytoplasmic-facing. The chain crosses the membrane as a helical; Signal-anchor for type II membrane protein span at residues 6-26 (LIFLLALTTGISAVLIYIIGV). The Lumenal portion of the chain corresponds to 27 to 440 (SNLYESNRFT…HGQLCITPAD (414 aa)). Residues Asn113 and Asn149 are each glycosylated (N-linked (GlcNAc...) asparagine).

It belongs to the glycosyltransferase 29 family.

The protein localises to the golgi apparatus membrane. In terms of biological role, may be involved in the transfer of 2-keto-3-deoxy-D-lyxo-heptulosaric acid (Dha) and/or 2-keto-3-deoxy-D-manno-octulosonic acid (Kdo) on the homogalacturonan backbone of rhamnogalacturonan-II. Required for efficient pollen grain germination and pollen tube elongation. Does not possess sialyltransferase activity in vitro. The chain is Sialyltransferase-like protein 2 from Arabidopsis thaliana (Mouse-ear cress).